The primary structure comprises 25 residues: Flagellar filament core protein flaB3 (25 aa).

Belongs to the bacterial flagellin family. The flagellum consists of an outer layer composed of two sheath proteins, flaA1 (44 kDa) and flaA2 (35 kDa) around a core that contains three proteins flaB1 (37 kDa), flaB2 (34 kDa) and flaB3 (32 kDa).

Its subcellular location is the periplasmic flagellum. The protein localises to the periplasm. Functionally, component of the core of the flagella. In Brachyspira hyodysenteriae (Treponema hyodysenteriae), this protein is Flagellar filament core protein flaB3 (flaB3).